The sequence spans 257 residues: Imidazole glycerol phosphate synthase subunit HisF (257 aa).

Active-site residues include D12 and D131.

Belongs to the HisA/HisF family. As to quaternary structure, heterodimer of HisH and HisF.

Its subcellular location is the cytoplasm. The enzyme catalyses 5-[(5-phospho-1-deoxy-D-ribulos-1-ylimino)methylamino]-1-(5-phospho-beta-D-ribosyl)imidazole-4-carboxamide + L-glutamine = D-erythro-1-(imidazol-4-yl)glycerol 3-phosphate + 5-amino-1-(5-phospho-beta-D-ribosyl)imidazole-4-carboxamide + L-glutamate + H(+). It functions in the pathway amino-acid biosynthesis; L-histidine biosynthesis; L-histidine from 5-phospho-alpha-D-ribose 1-diphosphate: step 5/9. Its function is as follows. IGPS catalyzes the conversion of PRFAR and glutamine to IGP, AICAR and glutamate. The HisF subunit catalyzes the cyclization activity that produces IGP and AICAR from PRFAR using the ammonia provided by the HisH subunit. The sequence is that of Imidazole glycerol phosphate synthase subunit HisF from Marinobacter nauticus (strain ATCC 700491 / DSM 11845 / VT8) (Marinobacter aquaeolei).